Here is a 172-residue protein sequence, read N- to C-terminus: Antibacterial protein PR-39 (172 aa).

The signal sequence occupies residues 1 to 29; that stretch reads METQRASLCLGRWSLWLLLLGLVVPSASA. Position 30 is a pyrrolidone carboxylic acid (Gln30). A propeptide spanning residues 30–130 is cleaved from the precursor; sequence QALSYREAVL…DISCNEIQSV (101 aa). Positions 61-80 are disordered; it reads DQPPKADEDPGTPKPVSFTV. 2 disulfides stabilise this stretch: Cys85–Cys96 and Cys107–Cys124. The interval 130–172 is disordered; the sequence is VRRRPRPPYLPRPRPPPFFPPRLPPRIPPGFPPRFPPRFPGKR. The span at 136–172 shows a compositional bias: pro residues; sequence PPYLPRPRPPPFFPPRLPPRIPPGFPPRFPPRFPGKR. Position 169 is a proline amide (Pro169).

Belongs to the cathelicidin family. Small intestine and bone marrow.

Its subcellular location is the secreted. Exerts a potent antimicrobial activity against both E.coli and B.megaterium. The chain is Antibacterial protein PR-39 (PR39) from Sus scrofa (Pig).